The chain runs to 173 residues: MPRSQKNDNFIDKTFTVVADIILKVLPTTVREKAAFSYYRDGMSAQAEGEYAEALQNYYEAMRLEIDPYDRSYILYNIGLIHTSNGEHGKALEYYYQAIERNPSLPQALNNIAVIYHYRGEQAIEEGNIATSEILFNQAASYWKQAIRLAPNSYIEAQNWLKITGRIEDNINL.

TPR repeat units follow at residues 35 to 68, 72 to 105, and 120 to 153; these read AFSY…EIDP, SYIL…NPSL, and GEQA…APNS.

Belongs to the Ycf3 family.

The protein resides in the plastid. It is found in the chloroplast thylakoid membrane. Functionally, essential for the assembly of the photosystem I (PSI) complex. May act as a chaperone-like factor to guide the assembly of the PSI subunits. The chain is Photosystem I assembly protein Ycf3 from Mesostigma viride (Green alga).